Reading from the N-terminus, the 202-residue chain is Large ribosomal subunit protein bL25 (202 aa).

The protein belongs to the bacterial ribosomal protein bL25 family. CTC subfamily. As to quaternary structure, part of the 50S ribosomal subunit; part of the 5S rRNA/L5/L18/L25 subcomplex. Contacts the 5S rRNA. Binds to the 5S rRNA independently of L5 and L18.

This is one of the proteins that binds to the 5S RNA in the ribosome where it forms part of the central protuberance. This chain is Large ribosomal subunit protein bL25, found in Corynebacterium efficiens (strain DSM 44549 / YS-314 / AJ 12310 / JCM 11189 / NBRC 100395).